A 599-amino-acid polypeptide reads, in one-letter code: Sulfite reductase [NADPH] flavoprotein alpha-component (599 aa).

The 139-residue stretch at 64 to 202 (ITLISASQTG…AAAEWRARVV (139 aa)) folds into the Flavodoxin-like domain. FMN-binding positions include 70-75 (SQTGNA), 117-120 (STQG), and 153-162 (LGDTSYEFFC). The FAD-binding FR-type domain occupies 234-448 (EAPLTATLSV…IEHNDNFRLP (215 aa)). FAD is bound by residues threonine 322, alanine 356, 386–389 (RLYS), 404–406 (TVG), tyrosine 410, and 419–422 (GGAS). Residues 519–520 (SR), 525–529 (KIYVQ), and aspartate 561 each bind NADP(+). Tyrosine 599 is a binding site for FAD.

It belongs to the NADPH-dependent sulphite reductase flavoprotein subunit CysJ family. This sequence in the N-terminal section; belongs to the flavodoxin family. In the C-terminal section; belongs to the flavoprotein pyridine nucleotide cytochrome reductase family. In terms of assembly, alpha(8)-beta(8). The alpha component is a flavoprotein, the beta component is a hemoprotein. Requires FAD as cofactor. It depends on FMN as a cofactor.

It carries out the reaction hydrogen sulfide + 3 NADP(+) + 3 H2O = sulfite + 3 NADPH + 4 H(+). Its pathway is sulfur metabolism; hydrogen sulfide biosynthesis; hydrogen sulfide from sulfite (NADPH route): step 1/1. Its function is as follows. Component of the sulfite reductase complex that catalyzes the 6-electron reduction of sulfite to sulfide. This is one of several activities required for the biosynthesis of L-cysteine from sulfate. The flavoprotein component catalyzes the electron flow from NADPH -&gt; FAD -&gt; FMN to the hemoprotein component. The polypeptide is Sulfite reductase [NADPH] flavoprotein alpha-component (Klebsiella pneumoniae subsp. pneumoniae (strain ATCC 700721 / MGH 78578)).